The primary structure comprises 288 residues: Bifunctional protein FolD (288 aa).

NADP(+) contacts are provided by residues 166-168 (GRS), serine 191, and valine 232.

The protein belongs to the tetrahydrofolate dehydrogenase/cyclohydrolase family. Homodimer.

The catalysed reaction is (6R)-5,10-methylene-5,6,7,8-tetrahydrofolate + NADP(+) = (6R)-5,10-methenyltetrahydrofolate + NADPH. It carries out the reaction (6R)-5,10-methenyltetrahydrofolate + H2O = (6R)-10-formyltetrahydrofolate + H(+). It participates in one-carbon metabolism; tetrahydrofolate interconversion. Its function is as follows. Catalyzes the oxidation of 5,10-methylenetetrahydrofolate to 5,10-methenyltetrahydrofolate and then the hydrolysis of 5,10-methenyltetrahydrofolate to 10-formyltetrahydrofolate. The protein is Bifunctional protein FolD of Roseiflexus sp. (strain RS-1).